The chain runs to 520 residues: Zinc finger and BTB domain-containing protein 18 (520 aa).

In terms of domain architecture, BTB spans 24–91; that stretch reads CDCTVLVGDA…MYEGILQFKG (68 aa). The interval 121–140 is disordered; it reads ATTDSTKKEEDTSSFSDKVE. 4 consecutive C2H2-type zinc fingers follow at residues 368–390, 408–430, 436–458, and 464–487; these read FMCPLCNKVFPSPHILQIHLSTH, PTCSLCGKTFSCMYTLKRHERTH, YTCTQCGKSFQYSHNLSRHAVVH, and HACKWCERRFTQSGDLYRHIRKFH.

The protein belongs to the krueppel C2H2-type zinc-finger protein family. ZBTB18 subfamily.

The protein resides in the nucleus. Transcriptional repressor that plays a role in various developmental processes. Specifically binds the consensus DNA sequence 5'-[AC]ACATCTG[GT][AC]-3' which contains the E box core, and acts by recruiting chromatin remodeling multiprotein complexes. This chain is Zinc finger and BTB domain-containing protein 18 (zbtb18), found in Xenopus laevis (African clawed frog).